A 393-amino-acid chain; its full sequence is Dual-specificity RNA methyltransferase RlmN (393 aa).

Glu-114 (proton acceptor) is an active-site residue. Residues 120–359 (EDDRATLCVS…VIVRKTRGDD (240 aa)) form the Radical SAM core domain. The cysteines at positions 127 and 364 are disulfide-linked. The [4Fe-4S] cluster site is built by Cys-134, Cys-138, and Cys-141. S-adenosyl-L-methionine is bound by residues 188 to 189 (GE), Ser-220, 242 to 244 (SLH), and Asn-321. Cys-364 functions as the S-methylcysteine intermediate in the catalytic mechanism.

The protein belongs to the radical SAM superfamily. RlmN family. [4Fe-4S] cluster is required as a cofactor.

It is found in the cytoplasm. The enzyme catalyses adenosine(2503) in 23S rRNA + 2 reduced [2Fe-2S]-[ferredoxin] + 2 S-adenosyl-L-methionine = 2-methyladenosine(2503) in 23S rRNA + 5'-deoxyadenosine + L-methionine + 2 oxidized [2Fe-2S]-[ferredoxin] + S-adenosyl-L-homocysteine. It carries out the reaction adenosine(37) in tRNA + 2 reduced [2Fe-2S]-[ferredoxin] + 2 S-adenosyl-L-methionine = 2-methyladenosine(37) in tRNA + 5'-deoxyadenosine + L-methionine + 2 oxidized [2Fe-2S]-[ferredoxin] + S-adenosyl-L-homocysteine. Functionally, specifically methylates position 2 of adenine 2503 in 23S rRNA and position 2 of adenine 37 in tRNAs. m2A2503 modification seems to play a crucial role in the proofreading step occurring at the peptidyl transferase center and thus would serve to optimize ribosomal fidelity. This Actinobacillus pleuropneumoniae serotype 3 (strain JL03) protein is Dual-specificity RNA methyltransferase RlmN.